The following is a 64-amino-acid chain: Conotoxin Ca5.3 (64 aa).

The first 22 residues, 1 to 22 (MRCVPVFIILLLLIASAPGVDA), serve as a signal peptide directing secretion. Positions 23–48 (QPKTKYNAPLTSLHDNAKGILQEHWN) are excised as a propeptide. At Ile-61 the chain carries Isoleucine amide.

Belongs to the conotoxin T superfamily. Contains 2 disulfide bonds that can be either 'C1-C3, C2-C4' or 'C1-C4, C2-C3', since these disulfide connectivities have been observed for conotoxins with cysteine framework V (for examples, see AC P0DQQ7 and AC P81755). Expressed by the venom duct.

It localises to the secreted. The sequence is that of Conotoxin Ca5.3 from Conus caracteristicus (Characteristic cone).